Reading from the N-terminus, the 449-residue chain is MSHITFDYSKVLESFAGQHEIDFLQGQVTEADKLLREGTGPGSDFLGWLDLPENYDKEEFARILTAAEKIKSDSEVLVVIGIGGSYLGAKAAIDFLNHHFANLQTAKERKAPQILYAGNSISSTYLADLVEYVQDKEFSVNVISKSGTTTEPAIAFRVFKELLVKKYGQEEANKRIYATTDKVKGAVKVEADANNWETFVVPDNVGGRFSVLTAVGLLPIAASGADITALMEGANAARKDLSSDKISENIAYQYAAVRNVLYRKGYITEILANYEPSLQYFGEWWKQLAGESEGKDQKGIYPTSANFSTDLHSLGQFIQEGYRNLFETVIRVDNPRKNVIIPELAEDLDGLGYLQGKDVDFVNKKATDGVLLAHTDGGVPNMFVTLPVQDEFTLGYTIYFFELAIAVSGYMNAVNPFDQPGVEAYKRNMFALLGKPGFEALSAELNARL.

Catalysis depends on E291, which acts as the Proton donor. Catalysis depends on residues H312 and K426.

It belongs to the GPI family.

Its subcellular location is the cytoplasm. It carries out the reaction alpha-D-glucose 6-phosphate = beta-D-fructose 6-phosphate. It functions in the pathway carbohydrate biosynthesis; gluconeogenesis. The protein operates within carbohydrate degradation; glycolysis; D-glyceraldehyde 3-phosphate and glycerone phosphate from D-glucose: step 2/4. In terms of biological role, catalyzes the reversible isomerization of glucose-6-phosphate to fructose-6-phosphate. The chain is Glucose-6-phosphate isomerase from Streptococcus pyogenes serotype M18 (strain MGAS8232).